The chain runs to 399 residues: Enoyl-[acyl-carrier-protein] reductase [NADH] (399 aa).

NAD(+)-binding positions include 49 to 54 (GASSGY), 75 to 76 (FE), 112 to 113 (DA), and 141 to 142 (LA). Tyr-227 is a binding site for substrate. Tyr-237 serves as the catalytic Proton donor. NAD(+) contacts are provided by residues Lys-246 and 272–274 (VVT).

Belongs to the TER reductase family. Monomer.

It catalyses the reaction a 2,3-saturated acyl-[ACP] + NAD(+) = a (2E)-enoyl-[ACP] + NADH + H(+). It participates in lipid metabolism; fatty acid biosynthesis. In terms of biological role, involved in the final reduction of the elongation cycle of fatty acid synthesis (FAS II). Catalyzes the reduction of a carbon-carbon double bond in an enoyl moiety that is covalently linked to an acyl carrier protein (ACP). The sequence is that of Enoyl-[acyl-carrier-protein] reductase [NADH] from Pseudomonas putida (strain W619).